Reading from the N-terminus, the 387-residue chain is Methylthioribose-1-phosphate isomerase (387 aa).

The active-site Proton donor is Asp257.

Belongs to the eIF-2B alpha/beta/delta subunits family. MtnA subfamily.

Its subcellular location is the cytoplasm. It localises to the nucleus. The catalysed reaction is 5-(methylsulfanyl)-alpha-D-ribose 1-phosphate = 5-(methylsulfanyl)-D-ribulose 1-phosphate. It participates in amino-acid biosynthesis; L-methionine biosynthesis via salvage pathway; L-methionine from S-methyl-5-thio-alpha-D-ribose 1-phosphate: step 1/6. Catalyzes the interconversion of methylthioribose-1-phosphate (MTR-1-P) into methylthioribulose-1-phosphate (MTRu-1-P). This is Methylthioribose-1-phosphate isomerase (mri1) from Neosartorya fischeri (strain ATCC 1020 / DSM 3700 / CBS 544.65 / FGSC A1164 / JCM 1740 / NRRL 181 / WB 181) (Aspergillus fischerianus).